The following is a 398-amino-acid chain: Odorant receptor 59b (398 aa).

The Cytoplasmic segment spans residues 1 to 46; it reads MAVFKLIKPAPLTEKVQSRQGNIYLYRAMWLIGWIPPKEGVLRYVY. The chain crosses the membrane as a helical span at residues 47-67; that stretch reads LFWTCVPFAFGVFYLPVGFII. At 68–84 the chain is on the extracellular side; the sequence is SYVQEFKNFTPGEFLTS. Residues 85-105 form a helical membrane-spanning segment; sequence LQVCINVYGASVKSTITYLFL. Residues 106–141 are Cytoplasmic-facing; sequence WRLRKTEILLDSLDKRLANDSDRERIHNMVARCNYA. The chain crosses the membrane as a helical span at residues 142 to 162; it reads FLIYSFIYCGYAGSTFLSYAL. The Extracellular segment spans residues 163-179; it reads SGRPPWSVYNPFIDWRD. The helical transmembrane segment at 180 to 200 threads the bilayer; it reads GMGSLWIQAIFEYITMSFAVL. At 201-269 the chain is on the cytoplasmic side; the sequence is QDQLSDTYPL…DMIRPMISRT (69 aa). A helical transmembrane segment spans residues 270 to 290; the sequence is IFVQFALIGSVLGLTLVNVFF. The Extracellular portion of the chain corresponds to 291–293; the sequence is FSN. A helical transmembrane segment spans residues 294 to 314; it reads FWKGVASLLFVITILLQTFPF. Over 315–348 the chain is Cytoplasmic; that stretch reads CYTCNMLIDDAQDLSNEIFQSNWVDAEPRYKATL. A helical membrane pass occupies residues 349–369; that stretch reads VLFMHHVQQPIIFIAGGIFPI. Residues 370–398 lie on the Extracellular side of the membrane; sequence SMNSNITVAKFAFSIITIVRQMNLAEQFQ. N-linked (GlcNAc...) asparagine glycosylation occurs at Asn374.

Belongs to the insect chemoreceptor superfamily. Heteromeric odorant receptor channel (TC 1.A.69) family. Or2a subfamily. In terms of assembly, interacts with Orco. Complexes exist early in the endomembrane system in olfactory sensory neurons (OSNs), coupling these complexes to the conserved ciliary trafficking pathway. In terms of tissue distribution, expressed in olfactory sensory neurons in the antenna.

It localises to the cell membrane. Odorant receptor which mediates acceptance or avoidance behavior, depending on its substrates. The odorant receptor repertoire encodes a large collection of odor stimuli that vary widely in identity, intensity, and duration. Forms a complex with Orco to form odorant-sensing units, providing sensitive and prolonged odorant signaling and calcium permeability. Also plays a role in the response to N,N-Diethyl-meta-toluamide (DEET), the most widely used insect repellent worldwide. In Drosophila melanogaster (Fruit fly), this protein is Odorant receptor 59b (Or59b).